We begin with the raw amino-acid sequence, 142 residues long: Transcriptional regulator MraZ (142 aa).

SpoVT-AbrB domains are found at residues A5 to E51 and A77 to T120.

The protein belongs to the MraZ family. Forms oligomers.

It localises to the cytoplasm. The protein localises to the nucleoid. The sequence is that of Transcriptional regulator MraZ from Burkholderia cenocepacia (strain HI2424).